Here is a 286-residue protein sequence, read N- to C-terminus: MSIQFNQVSYIYQQGTPYEFEAIKNVSLTLEQGKYYAIIGQTGSGKSTLIQHLNALLKPTTGSVNINGLEVTNKTKDKHLRHIRKEVGIVFQFPESQLFEDSVEKEIEFGPKNFNMNLKNVKDKAFQLLLELGFSRNVMSSSPFQMSGGQMRKIAIVSILAMDPQVIILDEPTAGLDPNSKHQVMSLIKKIQIEENKTIILVSHDMDDVARYSDEVVVMNKGTIVEKSNPRNLFSQKTQLLKWHIELPKVVKLQKDIEKKYNMLFPKLATNEEEFVKLYKEWHHEK.

In terms of domain architecture, ABC transporter spans 3-246 (IQFNQVSYIY…KTQLLKWHIE (244 aa)). 40–47 (GQTGSGKS) contacts ATP.

The protein belongs to the ABC transporter superfamily. Energy-coupling factor EcfA family. Forms a stable energy-coupling factor (ECF) transporter complex composed of 2 membrane-embedded substrate-binding proteins (S component), 2 ATP-binding proteins (A component) and 2 transmembrane proteins (T component).

It localises to the cell membrane. ATP-binding (A) component of a common energy-coupling factor (ECF) ABC-transporter complex. Unlike classic ABC transporters this ECF transporter provides the energy necessary to transport a number of different substrates. The chain is Energy-coupling factor transporter ATP-binding protein EcfA2 from Staphylococcus epidermidis (strain ATCC 12228 / FDA PCI 1200).